Reading from the N-terminus, the 284-residue chain is 2-dehydro-3-deoxyphosphooctonate aldolase (284 aa).

It belongs to the KdsA family.

The protein localises to the cytoplasm. It catalyses the reaction D-arabinose 5-phosphate + phosphoenolpyruvate + H2O = 3-deoxy-alpha-D-manno-2-octulosonate-8-phosphate + phosphate. Its pathway is carbohydrate biosynthesis; 3-deoxy-D-manno-octulosonate biosynthesis; 3-deoxy-D-manno-octulosonate from D-ribulose 5-phosphate: step 2/3. It participates in bacterial outer membrane biogenesis; lipopolysaccharide biosynthesis. The polypeptide is 2-dehydro-3-deoxyphosphooctonate aldolase (Actinobacillus pleuropneumoniae serotype 7 (strain AP76)).